We begin with the raw amino-acid sequence, 636 residues long: Ligand-gated ion channel 4 (636 aa).

A signal peptide spans 1–25 (MVICHSCTTFCILLVIDLVPCRIVG). Topologically, residues 26 to 326 (MENVENRVMF…IHMHRRPLFY (301 aa)) are extracellular. N-linked (GlcNAc...) asparagine glycans are attached at residues N45, N141, N179, and N227. C240 and C254 are oxidised to a cystine. N-linked (GlcNAc...) asparagine glycosylation is present at N284. The next 3 membrane-spanning stretches (helical) occupy residues 327–347 (VFNH…GFLM), 357–377 (MIIT…ESIP), and 383–403 (VPLI…ATCV). The Cytoplasmic portion of the chain corresponds to 404-602 (NVITLNMHRN…QLASVVDRLL (199 aa)). A helical membrane pass occupies residues 603-623 (LCLFCTATLFTIICLLIVPVV).

Belongs to the ligand-gated ion channel (TC 1.A.9) family.

It localises to the postsynaptic cell membrane. The protein resides in the cell membrane. In terms of biological role, acetylcholine receptor. The protein is Ligand-gated ion channel 4 of Caenorhabditis briggsae.